A 434-amino-acid chain; its full sequence is MSIITDVYAREVLDSRGNPTLEVEVYTESGAFGRGMVPSGASTGEHEAVELRDGDKSRYGGLGTQKAVDNVNNVIAEAIIGYDVRDQQAIDRAMIALDGTPNKGKLGANAILGVSIAVARAAADYLEIPLYSYLGGFNTKVLPTPMMNIINGGSHSDAPIAFQEFMILPVGAPTFKEALRYGAEIFHALKKILKSRGLETAVGDEGGFAPRFEGTEDGVETIIAAIEAAGYVPGKDVFIGFDCASSEFYDKERKVYDYTKFEGEGAAVRTAAEQIDYLEELVNKYPIITIEDGMDENDWDGWKALTERLGKKVQLVGDDFFVTNTDYLSRGIKEGCANSILIKVNQIGTLTETFDAIEMAKEAGYTAVVSHRSGETEDSTIADIAVATNAGQIKTGSLSRTDRIAKYNQLLRIEDQLGEVAQYKGLQAFYNLKK.

(2R)-2-phosphoglycerate is bound at residue Q163. E205 (proton donor) is an active-site residue. Mg(2+) contacts are provided by D242, E291, and D318. Positions 343, 372, 373, and 394 each coordinate (2R)-2-phosphoglycerate. K343 serves as the catalytic Proton acceptor.

The protein belongs to the enolase family. The cofactor is Mg(2+).

Its subcellular location is the cytoplasm. It localises to the secreted. The protein resides in the cell surface. It carries out the reaction (2R)-2-phosphoglycerate = phosphoenolpyruvate + H2O. Its pathway is carbohydrate degradation; glycolysis; pyruvate from D-glyceraldehyde 3-phosphate: step 4/5. Functionally, catalyzes the reversible conversion of 2-phosphoglycerate (2-PG) into phosphoenolpyruvate (PEP). It is essential for the degradation of carbohydrates via glycolysis. In Streptococcus gordonii (strain Challis / ATCC 35105 / BCRC 15272 / CH1 / DL1 / V288), this protein is Enolase.